The chain runs to 106 residues: Small ribosomal subunit protein uS10 (106 aa).

The protein belongs to the universal ribosomal protein uS10 family. In terms of assembly, part of the 30S ribosomal subunit.

Its function is as follows. Involved in the binding of tRNA to the ribosomes. This is Small ribosomal subunit protein uS10 from Synechococcus sp. (strain CC9311).